Reading from the N-terminus, the 135-residue chain is Putative pre-16S rRNA nuclease (135 aa).

It belongs to the YqgF nuclease family.

It localises to the cytoplasm. Its function is as follows. Could be a nuclease involved in processing of the 5'-end of pre-16S rRNA. The chain is Putative pre-16S rRNA nuclease from Christiangramia forsetii (strain DSM 17595 / CGMCC 1.15422 / KT0803) (Gramella forsetii).